The following is a 149-amino-acid chain: Nucleoside diphosphate kinase (149 aa).

Positions 9, 57, 85, 91, 102, and 112 each coordinate ATP. Residue His-115 is the Pros-phosphohistidine intermediate of the active site.

The protein belongs to the NDK family. As to quaternary structure, homotetramer. Requires Mg(2+) as cofactor.

It localises to the cytoplasm. It catalyses the reaction a 2'-deoxyribonucleoside 5'-diphosphate + ATP = a 2'-deoxyribonucleoside 5'-triphosphate + ADP. The enzyme catalyses a ribonucleoside 5'-diphosphate + ATP = a ribonucleoside 5'-triphosphate + ADP. Major role in the synthesis of nucleoside triphosphates other than ATP. The ATP gamma phosphate is transferred to the NDP beta phosphate via a ping-pong mechanism, using a phosphorylated active-site intermediate. In Gloeobacter violaceus (strain ATCC 29082 / PCC 7421), this protein is Nucleoside diphosphate kinase.